The primary structure comprises 190 residues: Dynein axonemal light chain 1 (190 aa).

Alanine 2 carries the post-translational modification N-acetylalanine. LRR repeat units follow at residues 49–70 (NCEKLSLSTNCIEKIANLNGLK), 71–92 (NLRILSLGRNNIKNLNGLEAVG), 94–115 (TLEELWISYNFIEKLKGIHIMK), and 116–137 (KLKILYMSNNLVKDWAEFVKLA). Serine 56 is modified (phosphoserine). An LRRCT domain is found at 150-190 (NPLEEKHSAENNWIEEATKRVPKLKKLDGTPVIKGDEEEDN).

This sequence belongs to the dynein light chain LC1-type family. In terms of assembly, interacts with ZMYND10 (via C-terminus). Interacts with DNAH5, a outer arm dynein heavy chain. Interacts with tubulin located within the A-tubule of the outer doublets in a ATP-independent manner. As to expression, expressed in tissues carrying motile cilia such as respiratory epithelia, ependyma and testis.

The protein resides in the cytoplasm. It is found in the cytoskeleton. Its subcellular location is the cilium axoneme. Part of the multisubunit axonemal ATPase complexes that generate the force for cilia motility and govern beat frequency. Component of the outer arm dynein (ODA). May be involved in a mechanosensory feedback mechanism controlling ODA activity based on external conformational cues by tethering the outer arm dynein heavy chain (DNAH5) to the microtubule within the axoneme. Important for ciliary function in the airways and for the function of the cilia that produce the nodal flow essential for the determination of the left-right asymmetry. This is Dynein axonemal light chain 1 from Homo sapiens (Human).